Consider the following 219-residue polypeptide: Ribose-5-phosphate isomerase A (219 aa).

Residues Thr28–Thr31, Asp81–Asp84, and Lys94–Gly97 contribute to the substrate site. Glu103 functions as the Proton acceptor in the catalytic mechanism. Lys121 contributes to the substrate binding site.

Belongs to the ribose 5-phosphate isomerase family. As to quaternary structure, homodimer.

It carries out the reaction aldehydo-D-ribose 5-phosphate = D-ribulose 5-phosphate. The protein operates within carbohydrate degradation; pentose phosphate pathway; D-ribose 5-phosphate from D-ribulose 5-phosphate (non-oxidative stage): step 1/1. In terms of biological role, catalyzes the reversible conversion of ribose-5-phosphate to ribulose 5-phosphate. This Methylibium petroleiphilum (strain ATCC BAA-1232 / LMG 22953 / PM1) protein is Ribose-5-phosphate isomerase A.